Reading from the N-terminus, the 219-residue chain is Adenylate kinase (219 aa).

12–17 (GAGKGT) is an ATP binding site. The tract at residues 32–61 (STGDMLRAAVKAGTPIGLQAKAVMDAGELV) is NMP. AMP contacts are provided by residues threonine 33, arginine 38, 59–61 (ELV), 87–90 (GYPR), and glutamine 94. The segment at 128–165 (GRFSCARCGEGYHDRYKLPKVADICDVCGSKEFKRRPD) is LID. Arginine 129 lines the ATP pocket. Residues cysteine 132, cysteine 135, cysteine 152, and cysteine 155 each coordinate Zn(2+). AMP contacts are provided by arginine 162 and arginine 174. Alanine 202 contacts ATP.

Belongs to the adenylate kinase family. Monomer.

The protein localises to the cytoplasm. The catalysed reaction is AMP + ATP = 2 ADP. It functions in the pathway purine metabolism; AMP biosynthesis via salvage pathway; AMP from ADP: step 1/1. In terms of biological role, catalyzes the reversible transfer of the terminal phosphate group between ATP and AMP. Plays an important role in cellular energy homeostasis and in adenine nucleotide metabolism. The sequence is that of Adenylate kinase from Sphingopyxis alaskensis (strain DSM 13593 / LMG 18877 / RB2256) (Sphingomonas alaskensis).